A 428-amino-acid chain; its full sequence is D-inositol 3-phosphate glycosyltransferase (428 aa).

Residue His-17 participates in 1D-myo-inositol 3-phosphate binding. UDP-N-acetyl-alpha-D-glucosamine contacts are provided by residues 23 to 24 (QP) and Gly-31. 1D-myo-inositol 3-phosphate-binding positions include 28–33 (DAGGMN), Arg-86, Tyr-119, Thr-143, and Arg-163. Residues Arg-237 and Lys-242 each coordinate UDP-N-acetyl-alpha-D-glucosamine. Mg(2+)-binding residues include Tyr-312, Arg-313, and Ala-315. The UDP-N-acetyl-alpha-D-glucosamine site is built by Glu-325 and Glu-333. Position 339 (Thr-339) interacts with Mg(2+).

The protein belongs to the glycosyltransferase group 1 family. MshA subfamily. As to quaternary structure, homodimer.

It catalyses the reaction 1D-myo-inositol 3-phosphate + UDP-N-acetyl-alpha-D-glucosamine = 1D-myo-inositol 2-acetamido-2-deoxy-alpha-D-glucopyranoside 3-phosphate + UDP + H(+). Catalyzes the transfer of a N-acetyl-glucosamine moiety to 1D-myo-inositol 3-phosphate to produce 1D-myo-inositol 2-acetamido-2-deoxy-glucopyranoside 3-phosphate in the mycothiol biosynthesis pathway. This Thermobispora bispora (strain ATCC 19993 / DSM 43833 / CBS 139.67 / JCM 10125 / KCTC 9307 / NBRC 14880 / R51) protein is D-inositol 3-phosphate glycosyltransferase.